The chain runs to 222 residues: UPF0758 protein CT0611 (222 aa).

One can recognise an MPN domain in the interval 100–222 (KVKGARDVFE…WFSFRDHALL (123 aa)). His-171, His-173, and Asp-184 together coordinate Zn(2+). Residues 171–184 (HNHPSGDVQPSNAD) carry the JAMM motif motif.

Belongs to the UPF0758 family.

This chain is UPF0758 protein CT0611, found in Chlorobaculum tepidum (strain ATCC 49652 / DSM 12025 / NBRC 103806 / TLS) (Chlorobium tepidum).